The following is a 394-amino-acid chain: Obg-like ATPase 1 (394 aa).

One can recognise an OBG-type G domain in the interval 25–282 (LKIGIVGLPN…MPPDEAAKYC (258 aa)). ATP is bound by residues 34-39 (NVGKST), 56-60 (FCTID), and 94-97 (DIAG). 34-39 (NVGKST) is a GTP binding site. Residues Ser-38 and Thr-58 each coordinate Mg(2+). GTP contacts are provided by Phe-129 and Asn-230. ATP-binding positions include 230-231 (NM), Met-231, and 263-265 (SCA). GTP is bound at residue 263-265 (SCA). Residues 303-386 (HLIYFFTAGP…QDGDIIFFKF (84 aa)) form the TGS domain.

This sequence belongs to the TRAFAC class OBG-HflX-like GTPase superfamily. OBG GTPase family. YchF/OLA1 subfamily. In terms of assembly, monomer (Potential). Interacts with GAP1. Requires Mg(2+) as cofactor.

The protein localises to the cell membrane. It localises to the cytoplasm. The protein resides in the cytosol. With respect to regulation, activated by GAP1. Functionally, hydrolyzes ATP, and can also hydrolyze GTP with lower efficiency. Has lower affinity for GTP (Potential). Exhibits GTPase activity. Exhibits similar binding affinities and hydrolytic activities toward both GTP and ATP. Binds to the 26 S ribosomal RNA in vitro, but not to the 5.8 S or 18 S rRNA. Confers sensitivity to salinity stress by suppressing the anti-oxidation enzymatic activities and increasing lipid peroxidation thus leading to the accumulation of reactive oxygen species (ROS). This Oryza sativa subsp. japonica (Rice) protein is Obg-like ATPase 1.